The chain runs to 188 residues: Xanthine phosphoribosyltransferase (188 aa).

2 residues coordinate xanthine: Leu-20 and Asn-27. 127 to 131 (AYGNA) contributes to the 5-phospho-alpha-D-ribose 1-diphosphate binding site. Position 155 (Lys-155) interacts with xanthine.

Belongs to the purine/pyrimidine phosphoribosyltransferase family. Xpt subfamily. Homodimer.

Its subcellular location is the cytoplasm. The catalysed reaction is XMP + diphosphate = xanthine + 5-phospho-alpha-D-ribose 1-diphosphate. It participates in purine metabolism; XMP biosynthesis via salvage pathway; XMP from xanthine: step 1/1. In terms of biological role, converts the preformed base xanthine, a product of nucleic acid breakdown, to xanthosine 5'-monophosphate (XMP), so it can be reused for RNA or DNA synthesis. The protein is Xanthine phosphoribosyltransferase of Parabacteroides distasonis (strain ATCC 8503 / DSM 20701 / CIP 104284 / JCM 5825 / NCTC 11152).